We begin with the raw amino-acid sequence, 454 residues long: MDPAKELIRITARAFYSTEHVLIIDALAIHSTLNDIDLAHILGMQLKGLRRLVGRLKEDGLISVESRGEKKEGAPPMTTLGKDGQPTSIKERLFYRDWYYLNYHRAIDSIKYRMMKLSKYIESQGAPTTEKKDLVCPRCKSQYTELEVMDNISPMGDFLCHMCQHSLDPATEDDTGENENMKRLNDQLSRIVDIMRNIDSTDVPENDFDTALSHALPIDRGSSNPARRIEIVESKPSIASTKGLSTAPDQISVSVMEDGDGVKIDPEELARRREKEAKQNMLPEWISKSTISGDITSVGAKEAAERASRDAHNMGLRVEDVAEDKKLRTDDDGAMDSYWAALKAEQERQAQQDQDEEEEEEDDDDDEFEDVDVGTASAQPASVPAISVSTPATSAQVSSTATDEDGPAAKRTKVTEAQSNGTAPAAAASSQAAAAESKNGESDEDEDELEFEDI.

In terms of domain architecture, HTH TFE/IIEalpha-type spans 4–111 (AKELIRITAR…NYHRAIDSIK (108 aa)). The segment at 327–454 (LRTDDDGAMD…DEDELEFEDI (128 aa)) is disordered. Residues 353 to 372 (DQDEEEEEEDDDDDEFEDVD) are compositionally biased toward acidic residues. Polar residues predominate over residues 387 to 401 (SVSTPATSAQVSSTA). Residues 423 to 437 (APAAAASSQAAAAES) show a composition bias toward low complexity. Residues 442–454 (SDEDEDELEFEDI) show a composition bias toward acidic residues.

This sequence belongs to the TFIIE alpha subunit family.

It is found in the nucleus. Its function is as follows. Transcription factor; part of the gene cluster that mediates the biosynthesis of enfumafungin, a glycosylated fernene-type triterpenoid with potent antifungal activity, mediated by its interaction with beta-1,3-glucan synthase and the fungal cell wall. Is possibly responsible for the transcription regulation of one or more genes within the gene cluster. The sequence is that of Transcription factor efuD from Hormonema carpetanum.